The primary structure comprises 429 residues: Enolase (429 aa).

A (2R)-2-phosphoglycerate-binding site is contributed by Gln163. Glu205 (proton donor) is an active-site residue. Residues Asp242, Glu286, and Asp313 each contribute to the Mg(2+) site. The (2R)-2-phosphoglycerate site is built by Lys338, Arg367, Ser368, and Lys389. The active-site Proton acceptor is the Lys338.

This sequence belongs to the enolase family. The cofactor is Mg(2+).

The protein localises to the cytoplasm. It localises to the secreted. The protein resides in the cell surface. It carries out the reaction (2R)-2-phosphoglycerate = phosphoenolpyruvate + H2O. It functions in the pathway carbohydrate degradation; glycolysis; pyruvate from D-glyceraldehyde 3-phosphate: step 4/5. Functionally, catalyzes the reversible conversion of 2-phosphoglycerate (2-PG) into phosphoenolpyruvate (PEP). It is essential for the degradation of carbohydrates via glycolysis. The sequence is that of Enolase from Geobacter metallireducens (strain ATCC 53774 / DSM 7210 / GS-15).